The sequence spans 95 residues: Integration host factor subunit beta (95 aa).

The disordered stretch occupies residues 56-76; sequence RAPRTGRNPKTGTSVELDGKY.

The protein belongs to the bacterial histone-like protein family. As to quaternary structure, heterodimer of an alpha and a beta chain.

This protein is one of the two subunits of integration host factor, a specific DNA-binding protein that functions in genetic recombination as well as in transcriptional and translational control. The polypeptide is Integration host factor subunit beta (Shewanella woodyi (strain ATCC 51908 / MS32)).